We begin with the raw amino-acid sequence, 318 residues long: MFMINILTLILPILLAVAFLTLVERKILGYMQFRKGPNIVGPHGLLQPFADAIKLFTKEPLRPATSSTTMFIIAPVLALTLALTMWSPLPMPYPLINMNLGVLFMLAMSSLAVYSILWSGWASNSKYALIGALRAVAQTISYEVTLAIILLSVLLMNGSYTLSTLATTQEQLWLLFPSWPLAMMWFISTLAETNRAPFDLTEGESELVSGFNVEYAAGPFALFFLAEYANIIMMNMLTAILFLGTFHNPHNPELYTANLIIKTLLLTMSFLWIRASYPRFRYDQLMHLLWKNFLPLTLALCMWHISLPIMTASIPPQT.

8 consecutive transmembrane segments (helical) span residues 2–22 (FMIN…FLTL), 70–90 (MFII…SPLP), 100–120 (LGVL…LWSG), 136–156 (VAQT…VLLM), 172–192 (LWLL…TLAE), 222–242 (LFFL…AILF), 253–273 (ELYT…FLWI), and 294–314 (LPLT…TASI).

It belongs to the complex I subunit 1 family. As to quaternary structure, core subunit of respiratory chain NADH dehydrogenase (Complex I) which is composed of 45 different subunits.

The protein localises to the mitochondrion inner membrane. It carries out the reaction a ubiquinone + NADH + 5 H(+)(in) = a ubiquinol + NAD(+) + 4 H(+)(out). Its function is as follows. Core subunit of the mitochondrial membrane respiratory chain NADH dehydrogenase (Complex I) which catalyzes electron transfer from NADH through the respiratory chain, using ubiquinone as an electron acceptor. Essential for the catalytic activity and assembly of complex I. This Balaenoptera physalus (Fin whale) protein is NADH-ubiquinone oxidoreductase chain 1 (MT-ND1).